The primary structure comprises 710 residues: Putative transmembrane protein ORF710 (710 aa).

An N-terminal signal peptide occupies residues 1–33 (MKLDRKKKRLLLKTIFSIVILILPLTFLHPTNS). 3 helical membrane passes run 41–61 (VPIQ…TAPL), 76–95 (YGTL…VVWY), and 689–709 (VAIV…IFAI).

It is found in the host membrane. The chain is Putative transmembrane protein ORF710 from Acidianus convivator (ATV).